The sequence spans 662 residues: uncharacterized protein (662 aa).

FAD contacts are provided by Ser-145, Glu-164, Trp-173, Asp-184, and Tyr-190. Residues 638 to 662 (SRLETSGVPREGVQRPGSRLRRRPS) form a disordered region.

The protein belongs to the FAD-binding monooxygenase family. It depends on FAD as a cofactor.

This is an uncharacterized protein from Sinorhizobium fredii (strain NBRC 101917 / NGR234).